The primary structure comprises 262 residues: tRNA pseudouridine synthase A (262 aa).

The Nucleophile role is filled by aspartate 52. Tyrosine 110 serves as a coordination point for substrate.

Belongs to the tRNA pseudouridine synthase TruA family. Homodimer.

It carries out the reaction uridine(38/39/40) in tRNA = pseudouridine(38/39/40) in tRNA. Functionally, formation of pseudouridine at positions 38, 39 and 40 in the anticodon stem and loop of transfer RNAs. The chain is tRNA pseudouridine synthase A from Chromobacterium violaceum (strain ATCC 12472 / DSM 30191 / JCM 1249 / CCUG 213 / NBRC 12614 / NCIMB 9131 / NCTC 9757 / MK).